Consider the following 174-residue polypeptide: Small ribosomal subunit protein uS5 (174 aa).

Positions 19–82 (LREKMIAVNR…EQARRGMFKV (64 aa)) constitute an S5 DRBM domain.

The protein belongs to the universal ribosomal protein uS5 family. In terms of assembly, part of the 30S ribosomal subunit. Contacts proteins S4 and S8.

Functionally, with S4 and S12 plays an important role in translational accuracy. Its function is as follows. Located at the back of the 30S subunit body where it stabilizes the conformation of the head with respect to the body. This Bordetella bronchiseptica (strain ATCC BAA-588 / NCTC 13252 / RB50) (Alcaligenes bronchisepticus) protein is Small ribosomal subunit protein uS5.